The chain runs to 2670 residues: Inositol 1,4,5-trisphosphate-gated calcium channel ITPR3 (2670 aa).

Over 1–2201 the chain is Cytoplasmic; the sequence is MNEMSSFLHI…LIYWFSRRMT (2201 aa). MIR domains are found at residues 113 to 173, 174 to 224, 232 to 288, 295 to 372, and 378 to 434; these read GDVV…LRSN, GDNV…INLF, EEVL…VEVV, GGAG…LDPT, and DSFV…IVSV. Positions 266, 268, 269, and 270 each coordinate 1D-myo-inositol 1,4,5-trisphosphate. Positions 321–344 are disordered; sequence PSYKGDVSDPKAAGPGAQSRTGRR. 1D-myo-inositol 1,4,5-trisphosphate is bound by residues Arg503, Lys507, Arg510, Tyr567, Arg568, and Lys569. A Ca(2+)-binding site is contributed by Arg743. Residues Ser916 and Ser934 each carry the phosphoserine modification. Residues Glu1122 and Glu1125 each contribute to the Ca(2+) site. The segment covering 1134–1153 has biased composition (basic and acidic residues); sequence VKGEEGEAGASKDKKERPSD. Disordered stretches follow at residues 1134–1164 and 1807–1849; these read VKGE…HGEK and NMSD…GLHR. Ser1813, Ser1832, and Ser1834 each carry phosphoserine. Residues 1831–1842 are compositionally biased toward low complexity; it reads SSFSMPSSSRYS. Residues Glu1881 and Glu1945 each contribute to the Ca(2+) site. ATP is bound by residues Ala1995, Glu2148, and Lys2151. Residues 2202 to 2222 form a helical membrane-spanning segment; that stretch reads LWGSISFNLAVFINIIIAFFY. Residues 2223–2233 are Extracellular-facing; it reads PYVEGASTGVL. Residues 2234-2254 form a helical membrane-spanning segment; it reads GSPLISLLFWILICFSIAALF. Residues 2255–2263 are Cytoplasmic-facing; the sequence is TKHYSVRPL. A helical transmembrane segment spans residues 2264–2284; sequence IVALVLRSIYYLGIGPTLNIL. Residues 2285–2324 are Extracellular-facing; that stretch reads GALNLTNKIVFVVSFVGNRGTFIRGYKAMVMDMEFLYHVG. The chain crosses the membrane as a helical span at residues 2325–2345; the sequence is YILTSVLGLFAHELFYSILLF. Residues 2346–2367 are Cytoplasmic-facing; it reads DLIYREETLFNVIKSVTRNGRS. The chain crosses the membrane as a helical span at residues 2368-2388; it reads ILLTALLALILVYLFSIVGFL. Residues 2389–2495 are Extracellular-facing; that stretch reads FLKDDFILEV…ESLFPARVVY (107 aa). An intrachain disulfide couples Cys2454 to Cys2460. Residues 2496 to 2516 traverse the membrane as a helical segment; that stretch reads DLLFFFIVIIIVLNLIFGVII. The Cytoplasmic portion of the chain corresponds to 2517–2670; it reads DTFADLRSEK…FVDVQNCMSR (154 aa). Positions 2537 and 2538 each coordinate ATP. Cys2537 is a Zn(2+) binding site. Positions 2540 and 2557 each coordinate Zn(2+). Residues Lys2559, His2562, Asn2563, and Met2564 each contribute to the ATP site. A Zn(2+)-binding site is contributed by His2562. Thr2580 lines the Ca(2+) pocket. Phosphoserine occurs at positions 2608 and 2669.

This sequence belongs to the InsP3 receptor family. In terms of assembly, homotetramer. Homodimer. Interacts with TRPC1 and TRPC3. Interacts with TRPC4. Interacts with TRPV4. Interacts with SIGMAR1. Interacts with AKT1 and PML. Interacts with IRAG2 (via coiled-coil domain). Interacts with CABP1. Interacts with TMBIM4/LFG4. Interacts with CEMIP. Interacts with TESPA1. Interacts with TMEM203. Interacts with BOK; regulates ITPR3 expression. Interacts with BCL2L10. Interacts with CHGA and CHGB. Phosphorylated by AKT1 on serine and/or threonine residues.

The protein localises to the endoplasmic reticulum membrane. The protein resides in the cytoplasmic vesicle. It localises to the secretory vesicle membrane. It catalyses the reaction Ca(2+)(in) = Ca(2+)(out). Its activity is regulated as follows. Inositol 1,4,5-trisphosphate-gated calcium channel is regulated by cytosolic calcium in a biphasic manner. At low concentrations, cytosolic calcium binds at a high-affinity juxtamembrane domain (JD) calcium binding site, allowing ITPR3 to activate by escaping a low-energy resting state through an ensemble of preactivated states. At high cytosolic calcium concentrations, ITPR3 preferentially enters an inhibited state stabilized by calcium binding at a second, low-affinity cytoplasmic domain (CD) calcium binding site. Its function is as follows. Inositol 1,4,5-trisphosphate-gated calcium channel that, upon 1D-myo-inositol 1,4,5-trisphosphate binding, transports calcium from the endoplasmic reticulum lumen to cytoplasm, thus releasing the intracellular calcium and therefore participates in cellular calcium ion homeostasis. 11D-myo-inositol 1,4,5-trisphosphate binds to the ligand-free channel without altering its global conformation, yielding the low-energy resting state, then progresses through resting-to preactivated transitions to the higher energy preactivated state, which increases affinity for calcium, promoting binding of the low basal cytosolic calcium at the juxtamembrane domain (JD) site, favoring the transition through the ensemble of high-energy intermediate states along the trajectory to the fully-open activated state. Upon opening, releases calcium in the cytosol where it can bind to the low-affinity cytoplasmic domain (CD) site and stabilizes the inhibited state to terminate calcium release. The sequence is that of Inositol 1,4,5-trisphosphate-gated calcium channel ITPR3 from Rattus norvegicus (Rat).